Consider the following 182-residue polypeptide: NADH-quinone oxidoreductase subunit I (182 aa).

4Fe-4S ferredoxin-type domains follow at residues 52–82 (LTRD…LQKA) and 92–121 (EFFR…LTPD). Residues Cys-62, Cys-65, Cys-68, Cys-72, Cys-101, Cys-104, Cys-107, and Cys-111 each contribute to the [4Fe-4S] cluster site.

The protein belongs to the complex I 23 kDa subunit family. NDH-1 is composed of 13 different subunits. Subunits NuoA, H, J, K, L, M, N constitute the membrane sector of the complex. [4Fe-4S] cluster is required as a cofactor.

The protein resides in the cell inner membrane. The catalysed reaction is a quinone + NADH + 5 H(+)(in) = a quinol + NAD(+) + 4 H(+)(out). In terms of biological role, NDH-1 shuttles electrons from NADH, via FMN and iron-sulfur (Fe-S) centers, to quinones in the respiratory chain. The immediate electron acceptor for the enzyme in this species is believed to be ubiquinone. Couples the redox reaction to proton translocation (for every two electrons transferred, four hydrogen ions are translocated across the cytoplasmic membrane), and thus conserves the redox energy in a proton gradient. This chain is NADH-quinone oxidoreductase subunit I, found in Pseudomonas aeruginosa (strain LESB58).